Here is a 513-residue protein sequence, read N- to C-terminus: Histidine--tRNA ligase (513 aa).

The transit peptide at 1 to 24 directs the protein to the mitochondrion; that stretch reads MADKAQLQEAIKTQGEVVRKLKSE. The 57-residue stretch at 3 to 59 folds into the WHEP-TRS domain; it reads DKAQLQEAIKTQGEVVRKLKSEKASKEQIDEEVARLLQLKAQLGGDEGKHVFVLKTA. Residues 130–132, R157, Q173, D177, R326, and 330–331 each bind L-histidine; these read DLT and YY.

Belongs to the class-II aminoacyl-tRNA synthetase family.

It is found in the cytoplasm. It localises to the mitochondrion. The catalysed reaction is tRNA(His) + L-histidine + ATP = L-histidyl-tRNA(His) + AMP + diphosphate + H(+). In terms of biological role, catalyzes the aminoacylation of histidyl-tRNA. This Danio rerio (Zebrafish) protein is Histidine--tRNA ligase.